Here is a 523-residue protein sequence, read N- to C-terminus: Flavin-dependent halogenase armH5 (523 aa).

Positions 17, 20, and 50 each coordinate FAD. The chloride site is built by Ser-328 and Gly-329. FAD is bound at residue Val-330.

This sequence belongs to the flavin-dependent halogenase family.

It carries out the reaction melleolide F + FADH2 + chloride + O2 = 6'-chloromelleolide F + FAD + 2 H2O + H(+). Flavin-dependent halogenase involved in the biosynthesis of melleolides, a range of antifungal and phytotoxic polyketide derivatives composed of an orsellinic acid (OA) moiety esterified to various sesquiterpene alcohols. The halogenase catalyzes the transfer of a single chlorine atom to the melleolide backbone, resulting in a 6'-chloromelleolide product. The enzyme acts on free substrate and does not depend on carrier-protein-dependent acceptor molecules. In Armillaria mellea (Honey mushroom), this protein is Flavin-dependent halogenase armH5.